A 385-amino-acid polypeptide reads, in one-letter code: Protein GOLM2 (385 aa).

Topologically, residues 1-12 (MVGFGAPRRTGR) are cytoplasmic. Residues 13–33 (LPPFVLVALLAVIGLLAFNYW) traverse the membrane as a helical; Signal-anchor for type II membrane protein segment. Residues 34–385 (SVSARQAALH…YHKDHLNETL (352 aa)) are Lumenal-facing. The stretch at 44–193 (DELLGLQAQV…KEELDKQPQK (150 aa)) forms a coiled coil. Positions 169–385 (LAERKREYEE…YHKDHLNETL (217 aa)) are disordered. 2 stretches are compositionally biased toward basic and acidic residues: residues 170 to 193 (AERKREYEENLTKQKEELDKQPQK) and 211 to 220 (EVKEKIEDPS). Residues 265-283 (LPSQSKSLLEKQPSLQPLS) are compositionally biased toward polar residues. Over residues 285-299 (TEHEVKKPLPDKKET) the composition is skewed to basic and acidic residues. Residues 356 to 367 (NGDDGNVEDDDH) are compositionally biased toward acidic residues. Positions 368–385 (DGQADAGEYHKDHLNETL) are enriched in basic and acidic residues.

Belongs to the GOLM family.

The protein localises to the membrane. This Xenopus laevis (African clawed frog) protein is Protein GOLM2 (golm2).